We begin with the raw amino-acid sequence, 209 residues long: Uracil phosphoribosyltransferase (209 aa).

5-phospho-alpha-D-ribose 1-diphosphate-binding positions include arginine 79, arginine 104, and 131–139; that span reads DPMLATGGS. Uracil contacts are provided by residues isoleucine 194 and 199-201; that span reads GDA. Aspartate 200 is a 5-phospho-alpha-D-ribose 1-diphosphate binding site.

Belongs to the UPRTase family. The cofactor is Mg(2+).

It catalyses the reaction UMP + diphosphate = 5-phospho-alpha-D-ribose 1-diphosphate + uracil. It participates in pyrimidine metabolism; UMP biosynthesis via salvage pathway; UMP from uracil: step 1/1. Allosterically activated by GTP. Catalyzes the conversion of uracil and 5-phospho-alpha-D-ribose 1-diphosphate (PRPP) to UMP and diphosphate. The protein is Uracil phosphoribosyltransferase of Streptococcus salivarius.